We begin with the raw amino-acid sequence, 271 residues long: Catechol O-methyltransferase (271 aa).

At 1–6 (MPEAPP) the chain is on the cytoplasmic side. The chain crosses the membrane as a helical; Signal-anchor for type II membrane protein span at residues 7–26 (LLLAAVLLGLVLLVVLLLLL). Over 27–271 (RHWGWGLCLI…YKGPGSEAGP (245 aa)) the chain is Extracellular. S-adenosyl-L-methionine is bound by residues V92, E114, S122, E140, I141, 167–170 (GASQ), S169, and D191. D191 contacts Mg(2+). Residue K194 participates in substrate binding. 2 residues coordinate Mg(2+): D219 and N220. N220 and E249 together coordinate substrate. Position 267 is a phosphoserine (S267).

Belongs to the class I-like SAM-binding methyltransferase superfamily. Cation-dependent O-methyltransferase family. The cofactor is Mg(2+). In terms of processing, the N-terminus is blocked. As to expression, brain, liver, placenta, lymphocytes and erythrocytes.

Its subcellular location is the cytoplasm. It localises to the cell membrane. The enzyme catalyses a catechol + S-adenosyl-L-methionine = a guaiacol + S-adenosyl-L-homocysteine + H(+). The catalysed reaction is 2-hydroxyestrone + S-adenosyl-L-methionine = 2-hydroxy-3-methoxy-estrone + S-adenosyl-L-homocysteine + H(+). It carries out the reaction 4-hydroxyestrone + S-adenosyl-L-methionine = 4-methoxyestrone + S-adenosyl-L-homocysteine + H(+). It catalyses the reaction 2-hydroxyestrone + S-adenosyl-L-methionine = 2-methoxyestrone + S-adenosyl-L-homocysteine + H(+). The enzyme catalyses 4-hydroxy-17beta-estradiol + S-adenosyl-L-methionine = 4-methoxy-17beta-estradiol + S-adenosyl-L-homocysteine + H(+). The catalysed reaction is 2-hydroxy-17beta-estradiol + S-adenosyl-L-methionine = 2-hydroxy-3-methoxy-17beta-estradiol + S-adenosyl-L-homocysteine + H(+). It carries out the reaction 2-hydroxy-17beta-estradiol + S-adenosyl-L-methionine = 2-methoxy-17beta-estradiol + S-adenosyl-L-homocysteine + H(+). Functionally, catalyzes the O-methylation, and thereby the inactivation, of catecholamine neurotransmitters and catechol hormones. Also shortens the biological half-lives of certain neuroactive drugs, like L-DOPA, alpha-methyl DOPA and isoproterenol. This is Catechol O-methyltransferase from Homo sapiens (Human).